The sequence spans 159 residues: Nudix hydrolase DR_1025 (159 aa).

The Mg(2+) site is built by Met-1, Arg-14, and Ser-49. 1–6 (MEHDER) is an ATP binding site. One can recognise a Nudix hydrolase domain in the interval 11-144 (VELRAAGVVL…QIRMYQTKLF (134 aa)). ATP is bound at residue 50–51 (GA). The Nudix box motif lies at 50–71 (GAVEDGENPQDAAVREACEETG). Mg(2+)-binding residues include Glu-53 and Glu-65. Position 87–89 (87–89 (FPD)) interacts with ATP. Arg-95 serves as a coordination point for Mg(2+).

It belongs to the Nudix hydrolase family. As to quaternary structure, homodimer. The cofactor is Mg(2+).

It carries out the reaction 8-oxo-dGTP + H2O = 8-oxo-dGDP + phosphate + H(+). The catalysed reaction is 8-oxo-GTP + H2O = 8-oxo-GDP + phosphate + H(+). It catalyses the reaction P(1),P(4)-bis(5'-adenosyl) tetraphosphate + H2O = AMP + ATP + 2 H(+). Functionally, hydrolase that can act as a nucleoside triphosphatase and a dinucleoside polyphosphate pyrophosphatase. The best substrates are 8-oxo-dGTP and 8-oxo-GTP. Other substrates include Ap4A, dGTP and GTP. May be involved in protection from damage caused by radiation. The chain is Nudix hydrolase DR_1025 from Deinococcus radiodurans (strain ATCC 13939 / DSM 20539 / JCM 16871 / CCUG 27074 / LMG 4051 / NBRC 15346 / NCIMB 9279 / VKM B-1422 / R1).